Here is a 350-residue protein sequence, read N- to C-terminus: 3'-hydroxy-N-methyl-(S)-coclaurine 4'-O-methyltransferase (350 aa).

S-adenosyl-L-methionine is bound by residues Gly-196, Asp-219, Asp-239, Met-240, and Lys-253. Catalysis depends on His-257, which acts as the Proton acceptor.

The protein belongs to the class I-like SAM-binding methyltransferase superfamily. Cation-independent O-methyltransferase family. COMT subfamily. Homodimer.

The enzyme catalyses (S)-3'-hydroxy-N-methylcoclaurine + S-adenosyl-L-methionine = (S)-reticuline + S-adenosyl-L-homocysteine + H(+). The protein operates within alkaloid biosynthesis; (S)-reticuline biosynthesis; (S)-reticuline from (S)-norcoclaurine: step 4/4. In terms of biological role, catalyzes the transfer of the methyl group to the 4'-hydroxyl group of 3'-hydroxy-N-methylcoclaurine to form reticuline. The sequence is that of 3'-hydroxy-N-methyl-(S)-coclaurine 4'-O-methyltransferase from Coptis japonica (Japanese goldthread).